The following is a 136-amino-acid chain: Transcription antitermination protein NusB (136 aa).

This sequence belongs to the NusB family.

Its function is as follows. Involved in transcription antitermination. Required for transcription of ribosomal RNA (rRNA) genes. Binds specifically to the boxA antiterminator sequence of the ribosomal RNA (rrn) operons. The chain is Transcription antitermination protein NusB from Arthrobacter sp. (strain FB24).